A 134-amino-acid chain; its full sequence is Replication enhancer protein (134 aa).

The protein belongs to the geminiviridae replication enhancer protein family. Homooligomer. Interacts with the replication-associated protein (REP). Interacts with host proliferating cell nuclear antigen (PCNA). Interacts with host retinoblastoma-related protein 1 (RBR1), and may thereby deregulate the host cell cycle. Oligomerization and interaction with PCNA are necessary for optimal replication enhancement.

Its function is as follows. Increases viral DNA accumulation. Enhances infectivity and symptom expression. This chain is Replication enhancer protein, found in Mungbean yellow mosaic virus (strain Vigna) (MYMV).